The following is a 644-amino-acid chain: Chaperone protein DnaK (644 aa).

Disordered regions lie at residues 490–533 and 570–644; these read QEEA…ELDD and EELQ…EDDA. Basic and acidic residues predominate over residues 492-513; the sequence is EAEKHKEEDEARRERIEARNEA. Residues 523-533 show a composition bias toward acidic residues; the sequence is LLEENEEELDD. Gly residues predominate over residues 588–622; sequence GPGGAGGAAGAGPGGMGGMGGAAGPGGAGGAGPGG. Positions 624-644 are enriched in acidic residues; it reads DADDEEYVDADFEDVDDEDDA.

It belongs to the heat shock protein 70 family.

Its function is as follows. Acts as a chaperone. The protein is Chaperone protein DnaK of Halorubrum lacusprofundi (strain ATCC 49239 / DSM 5036 / JCM 8891 / ACAM 34).